Here is a 199-residue protein sequence, read N- to C-terminus: Superoxide dismutase [Mn] 2 (199 aa).

Mn(2+) contacts are provided by histidine 28, histidine 75, aspartate 157, and histidine 161.

The protein belongs to the iron/manganese superoxide dismutase family. The cofactor is Mn(2+).

The catalysed reaction is 2 superoxide + 2 H(+) = H2O2 + O2. Functionally, destroys superoxide anion radicals which are normally produced within the cells and which are toxic to biological systems. The polypeptide is Superoxide dismutase [Mn] 2 (sod2) (Haloferax volcanii (strain ATCC 29605 / DSM 3757 / JCM 8879 / NBRC 14742 / NCIMB 2012 / VKM B-1768 / DS2) (Halobacterium volcanii)).